The chain runs to 1069 residues: Enteropeptidase (1069 aa).

Residues 1–18 are Cytoplasmic-facing; it reads MKSSRDEAVGHHSISSFE. The helical; Signal-anchor for type II membrane protein transmembrane segment at 19–47 threads the bilayer; sequence VMLSALFIMLMVFSIGLIAVSWLAVKESE. At 48–1069 the chain is on the extracellular side; that stretch reads GDAALGKSHE…FIEWIHSFLH (1022 aa). Positions 54–169 constitute an SEA domain; it reads KSHEVRGTFK…NSIDITASLS (116 aa). Residues asparagine 147, asparagine 197, and asparagine 212 are each glycosylated (N-linked (GlcNAc...) asparagine). Residues 227–268 enclose the LDL-receptor class A 1 domain; the sequence is IECQPGSRPCAHAWNCVATDLFCDGEVNCPDGSDEDTGLCAT. Cystine bridges form between cysteine 229/cysteine 242, cysteine 236/cysteine 255, cysteine 249/cysteine 266, and cysteine 270/cysteine 298. A CUB 1 domain is found at 270–379; it reads CDGRFLLTGD…IGFNATYSTF (110 aa). Asparagine 373, asparagine 380, asparagine 433, asparagine 515, asparagine 579, and asparagine 675 each carry an N-linked (GlcNAc...) asparagine glycan. Residues 387–549 enclose the MAM domain; it reads YEKIDCTFDD…ISLTNGICSQ (163 aa). Cysteines 569 and 597 form a disulfide. Residues 569–679 enclose the CUB 2 domain; sequence CGGPFELWEP…KGFKANFTSG (111 aa). Positions 686–724 constitute an LDL-receptor class A 2 domain; sequence EPCQDDEFQCKDGNCIPLGNLCDSYPHCRDGSDEASCVR. 3 disulfides stabilise this stretch: cysteine 688/cysteine 700, cysteine 695/cysteine 713, and cysteine 707/cysteine 722. Positions 723 to 816 constitute an SRCR domain; the sequence is VRFLNGTRSN…LILLQCNHKS (94 aa). N-linked (GlcNAc...) asparagine glycans are attached at residues asparagine 727, asparagine 751, asparagine 770, and asparagine 791. 6 disulfides stabilise this stretch: cysteine 802-cysteine 812, cysteine 817-cysteine 945, cysteine 859-cysteine 875, cysteine 959-cysteine 1027, cysteine 991-cysteine 1006, and cysteine 1017-cysteine 1045. Residues 830-1069 form the Peptidase S1 domain; the sequence is IVGGSDAQAG…FIEWIHSFLH (240 aa). Histidine 874 acts as the Charge relay system in catalysis. N-linked (GlcNAc...) asparagine glycosylation occurs at asparagine 897. Aspartate 925 (charge relay system) is an active-site residue. Residues asparagine 936 and asparagine 999 are each glycosylated (N-linked (GlcNAc...) asparagine). Serine 1021 serves as the catalytic Charge relay system.

Belongs to the peptidase S1 family. As to quaternary structure, heterodimer of a catalytic (light) chain and a multidomain (heavy) chain linked by a disulfide bond. Post-translationally, the chains are derived from a single precursor that is cleaved by a trypsin-like protease.

It is found in the membrane. It carries out the reaction Activation of trypsinogen by selective cleavage of 6-Lys-|-Ile-7 bond.. Its function is as follows. Responsible for initiating activation of pancreatic proteolytic proenzymes (trypsin, chymotrypsin and carboxypeptidase A). It catalyzes the conversion of trypsinogen to trypsin which in turn activates other proenzymes including chymotrypsinogen, procarboxypeptidases, and proelastases. In Mus musculus (Mouse), this protein is Enteropeptidase (Tmprss15).